A 406-amino-acid chain; its full sequence is Argininosuccinate synthase (406 aa).

ATP-binding positions include 12-20 and Ala-39; that span reads AYSGGLDTS. Tyr-90 and Ser-95 together coordinate L-citrulline. Gly-120 is a binding site for ATP. Thr-122, Asn-126, and Asp-127 together coordinate L-aspartate. L-citrulline is bound at residue Asn-126. 5 residues coordinate L-citrulline: Arg-130, Ser-179, Ser-188, Glu-264, and Tyr-276.

The protein belongs to the argininosuccinate synthase family. Type 1 subfamily. As to quaternary structure, homotetramer.

Its subcellular location is the cytoplasm. The catalysed reaction is L-citrulline + L-aspartate + ATP = 2-(N(omega)-L-arginino)succinate + AMP + diphosphate + H(+). Its pathway is amino-acid biosynthesis; L-arginine biosynthesis; L-arginine from L-ornithine and carbamoyl phosphate: step 2/3. The protein is Argininosuccinate synthase of Geobacter sp. (strain M21).